The sequence spans 327 residues: GMP reductase (327 aa).

Cys-175 functions as the Thioimidate intermediate in the catalytic mechanism. 204-227 (IIADGGIRTHGDVAKSIRFGATMV) is an NADP(+) binding site.

It belongs to the IMPDH/GMPR family. GuaC type 2 subfamily.

It carries out the reaction IMP + NH4(+) + NADP(+) = GMP + NADPH + 2 H(+). Catalyzes the irreversible NADPH-dependent deamination of GMP to IMP. It functions in the conversion of nucleobase, nucleoside and nucleotide derivatives of G to A nucleotides, and in maintaining the intracellular balance of A and G nucleotides. The protein is GMP reductase of Bacillus cereus (strain ATCC 10987 / NRS 248).